The chain runs to 1442 residues: ABC transporter G family member 11 (1442 aa).

An ABC transporter 1 domain is found at 125-373 (LFTPSFWTKK…FMSLGFDCEP (249 aa)). In terms of domain architecture, ABC transmembrane type-2 1 spans 478–718 (LNDKFGMYSK…EQGSLYFKGD (241 aa)). Transmembrane regions (helical) follow at residues 482–502 (FGMY…ASLF), 518–538 (AILS…AMTF), 567–587 (IPFT…MFGL), 592–612 (GKFF…TALF), 627–647 (NISN…IPIP), and 737–757 (IIVY…MEYI). Residues 808 to 1052 (FTWQNIRYTV…LTSYFERHGV (245 aa)) form the ABC transporter 2 domain. ATP is bound at residue 844 to 851 (GSSGAGKT). The ABC transmembrane type-2 2 domain occupies 1144–1369 (YYTYGSFVQA…YNTCQNYTSA (226 aa)). The next 6 helical transmembrane spans lie at 1147 to 1167 (YGSF…FWNL), 1181 to 1201 (IFEA…QLII), 1220 to 1240 (FAIS…TIFF), 1259 to 1279 (FYFW…GQAV), 1286 to 1306 (MFFA…FCGV), and 1416 to 1436 (VGII…FVYL).

The protein belongs to the ABC transporter superfamily. ABCG family. PDR (TC 3.A.1.205) subfamily.

It localises to the membrane. In Dictyostelium discoideum (Social amoeba), this protein is ABC transporter G family member 11 (abcG11).